A 164-amino-acid polypeptide reads, in one-letter code: Endoribonuclease YbeY (164 aa).

Residues H130, H134, and H140 each contribute to the Zn(2+) site.

The protein belongs to the endoribonuclease YbeY family. Zn(2+) serves as cofactor.

The protein localises to the cytoplasm. Single strand-specific metallo-endoribonuclease involved in late-stage 70S ribosome quality control and in maturation of the 3' terminus of the 16S rRNA. The sequence is that of Endoribonuclease YbeY from Streptococcus mutans serotype c (strain ATCC 700610 / UA159).